Reading from the N-terminus, the 463-residue chain is Methionine aminopeptidase 2-1 (463 aa).

Basic and acidic residues predominate over residues 1–12; the sequence is MGSKTPDGHRQG. Residues 1-96 form a disordered region; sequence MGSKTPDGHR…SGQQTTPPRV (96 aa). The span at 41–53 shows a compositional bias: acidic residues; sequence SGEDDEDGDDDEE. Over residues 58–67 the composition is skewed to polar residues; that stretch reads DLNSRAQPNN. Residues 70–85 are compositionally biased toward basic residues; that stretch reads KKRKRKNNKKKKKKRP. Substrate is bound at residue His-215. Residues Asp-236, Asp-247, and His-316 each coordinate a divalent metal cation. Position 324 (His-324) interacts with substrate. 2 residues coordinate a divalent metal cation: Glu-349 and Glu-444.

This sequence belongs to the peptidase M24A family. Methionine aminopeptidase eukaryotic type 2 subfamily. Co(2+) is required as a cofactor. The cofactor is Zn(2+). Mn(2+) serves as cofactor. It depends on Fe(2+) as a cofactor.

Its subcellular location is the cytoplasm. The catalysed reaction is Release of N-terminal amino acids, preferentially methionine, from peptides and arylamides.. In terms of biological role, cotranslationally removes the N-terminal methionine from nascent proteins. The N-terminal methionine is often cleaved when the second residue in the primary sequence is small and uncharged (Met-Ala-, Cys, Gly, Pro, Ser, Thr, or Val). The chain is Methionine aminopeptidase 2-1 from Arthroderma otae (strain ATCC MYA-4605 / CBS 113480) (Microsporum canis).